A 665-amino-acid polypeptide reads, in one-letter code: Cysteine-rich receptor-like protein kinase 41 (665 aa).

The first 27 residues, 1-27 (MTSSCSLSRPQHLFFFFFLFVPFLSLG), serve as a signal peptide directing secretion. Over 28-280 (QQISVDINSA…DPKPGNDKVK (253 aa)) the chain is Extracellular. 2 consecutive Gnk2-homologous domains span residues 42–148 (PSNP…DKPI) and 154–260 (TSPV…SDLR). N-linked (GlcNAc...) asparagine glycans are attached at residues N120, N165, and N236. A helical membrane pass occupies residues 281–301 (IIIATVCSVIGFAIIAVFLYF). Residues 302 to 665 (FMTRNRRTAK…DVTITEFDAR (364 aa)) lie on the Cytoplasmic side of the membrane. In terms of domain architecture, Protein kinase spans 344–624 (FSRDNQLGEG…VVMLNANSFT (281 aa)). ATP is bound by residues 350–358 (LGEGGFGAV) and K372. Phosphotyrosine is present on Y417. Residue D469 is the Proton acceptor of the active site. Residue S473 is modified to Phosphoserine. T511 is modified (phosphothreonine). At Y519 the chain carries Phosphotyrosine.

Belongs to the protein kinase superfamily. Ser/Thr protein kinase family. CRK subfamily.

It localises to the membrane. It catalyses the reaction L-seryl-[protein] + ATP = O-phospho-L-seryl-[protein] + ADP + H(+). The catalysed reaction is L-threonyl-[protein] + ATP = O-phospho-L-threonyl-[protein] + ADP + H(+). In Arabidopsis thaliana (Mouse-ear cress), this protein is Cysteine-rich receptor-like protein kinase 41 (CRK41).